We begin with the raw amino-acid sequence, 154 residues long: Crossover junction endodeoxyribonuclease RuvC (154 aa).

Residues Asp7, Glu66, and Asp139 contribute to the active site. Residues Asp7, Glu66, and Asp139 each coordinate Mg(2+).

It belongs to the RuvC family. Homodimer which binds Holliday junction (HJ) DNA. The HJ becomes 2-fold symmetrical on binding to RuvC with unstacked arms; it has a different conformation from HJ DNA in complex with RuvA. In the full resolvosome a probable DNA-RuvA(4)-RuvB(12)-RuvC(2) complex forms which resolves the HJ. Mg(2+) serves as cofactor.

The protein localises to the cytoplasm. The catalysed reaction is Endonucleolytic cleavage at a junction such as a reciprocal single-stranded crossover between two homologous DNA duplexes (Holliday junction).. The RuvA-RuvB-RuvC complex processes Holliday junction (HJ) DNA during genetic recombination and DNA repair. Endonuclease that resolves HJ intermediates. Cleaves cruciform DNA by making single-stranded nicks across the HJ at symmetrical positions within the homologous arms, yielding a 5'-phosphate and a 3'-hydroxyl group; requires a central core of homology in the junction. The consensus cleavage sequence is 5'-(A/T)TT(C/G)-3'. Cleavage occurs on the 3'-side of the TT dinucleotide at the point of strand exchange. HJ branch migration catalyzed by RuvA-RuvB allows RuvC to scan DNA until it finds its consensus sequence, where it cleaves and resolves the cruciform DNA. The sequence is that of Crossover junction endodeoxyribonuclease RuvC from Aliarcobacter butzleri (strain RM4018) (Arcobacter butzleri).